Consider the following 78-residue polypeptide: Large ribosomal subunit protein uL29 (78 aa).

The protein belongs to the universal ribosomal protein uL29 family.

The protein is Large ribosomal subunit protein uL29 of Salinispora arenicola (strain CNS-205).